A 150-amino-acid polypeptide reads, in one-letter code: Ribonuclease H (150 aa).

The 142-residue stretch at 7-148 (ERPRVEIWTD…VDQLATRGRE (142 aa)) folds into the RNase H type-1 domain. Mg(2+) is bound by residues Asp-16, Glu-54, Asp-76, and Asp-140.

The protein belongs to the RNase H family. In terms of assembly, monomer. Requires Mg(2+) as cofactor.

The protein localises to the cytoplasm. The catalysed reaction is Endonucleolytic cleavage to 5'-phosphomonoester.. In terms of biological role, endonuclease that specifically degrades the RNA of RNA-DNA hybrids. The protein is Ribonuclease H of Gluconobacter oxydans (strain 621H) (Gluconobacter suboxydans).